We begin with the raw amino-acid sequence, 151 residues long: Deoxyuridine 5'-triphosphate nucleotidohydrolase (151 aa).

Residues 70–72 (RSG), N83, 87–89 (LID), and M97 contribute to the substrate site.

Belongs to the dUTPase family. As to quaternary structure, homotrimer. Requires Mg(2+) as cofactor.

The catalysed reaction is dUTP + H2O = dUMP + diphosphate + H(+). Its pathway is pyrimidine metabolism; dUMP biosynthesis; dUMP from dCTP (dUTP route): step 2/2. In terms of biological role, this enzyme is involved in nucleotide metabolism: it produces dUMP, the immediate precursor of thymidine nucleotides and it decreases the intracellular concentration of dUTP so that uracil cannot be incorporated into DNA. In Escherichia coli O7:K1 (strain IAI39 / ExPEC), this protein is Deoxyuridine 5'-triphosphate nucleotidohydrolase.